We begin with the raw amino-acid sequence, 530 residues long: Tyrosinase (530 aa).

The first 18 residues, 1-18 (MLLAALCCLLWSFRTSTG), serve as a signal peptide directing secretion. Over 19-473 (HFPRACASSK…IKPYLEQASR (455 aa)) the chain is Lumenal, melanosome. N-linked (GlcNAc...) asparagine glycans are attached at residues asparagine 86, asparagine 111, and asparagine 161. Histidine 180, histidine 202, and histidine 211 together coordinate Cu cation. N-linked (GlcNAc...) asparagine glycans are attached at residues asparagine 230 and asparagine 337. Cu cation contacts are provided by histidine 363 and histidine 367. Residue asparagine 371 is glycosylated (N-linked (GlcNAc...) asparagine). Cu cation is bound at residue histidine 390. A helical transmembrane segment spans residues 474–494 (IWPWLIGAAVVGCVVTAVLGG). Topologically, residues 495 to 530 (LTSLLCRRNRKQLHEEKQPLLMEKEDYHSLLYQTHL) are cytoplasmic.

Belongs to the tyrosinase family. In terms of assembly, forms an OPN3-dependent complex with DCT in response to blue light in melanocytes. Cu(2+) is required as a cofactor. Post-translationally, glycosylated.

Its subcellular location is the melanosome membrane. It localises to the melanosome. The enzyme catalyses 2 L-dopa + O2 = 2 L-dopaquinone + 2 H2O. It catalyses the reaction L-tyrosine + O2 = L-dopaquinone + H2O. The catalysed reaction is 2 5,6-dihydroxyindole-2-carboxylate + O2 = 2 indole-5,6-quinone-2-carboxylate + 2 H2O. In terms of biological role, this is a copper-containing oxidase that functions in the formation of pigments such as melanins and other polyphenolic compounds. Catalyzes the initial and rate limiting step in the cascade of reactions leading to melanin production from tyrosine. In addition to hydroxylating tyrosine to DOPA (3,4-dihydroxyphenylalanine), also catalyzes the oxidation of DOPA to DOPA-quinone, and possibly the oxidation of DHI (5,6-dihydroxyindole) to indole-5,6 quinone. The chain is Tyrosinase (TYR) from Canis lupus familiaris (Dog).